The chain runs to 195 residues: Imidazoleglycerol-phosphate dehydratase (195 aa).

Belongs to the imidazoleglycerol-phosphate dehydratase family.

The protein resides in the cytoplasm. It carries out the reaction D-erythro-1-(imidazol-4-yl)glycerol 3-phosphate = 3-(imidazol-4-yl)-2-oxopropyl phosphate + H2O. It participates in amino-acid biosynthesis; L-histidine biosynthesis; L-histidine from 5-phospho-alpha-D-ribose 1-diphosphate: step 6/9. In Acetivibrio thermocellus (strain ATCC 27405 / DSM 1237 / JCM 9322 / NBRC 103400 / NCIMB 10682 / NRRL B-4536 / VPI 7372) (Clostridium thermocellum), this protein is Imidazoleglycerol-phosphate dehydratase.